The chain runs to 449 residues: Protein adenylyltransferase FICD (449 aa).

A helical membrane pass occupies residues 15–35; it reads LLWGWGPILFGLLGSVFVLLL. TPR repeat units lie at residues 96–129 and 130–163; these read AKAA…NPEF and VEAL…SPCH. An Inhibitory (S/T)XXXE(G/N) motif motif is present at residues 220 to 225; the sequence is TVAIEG. ATP-binding positions include Glu-224, 250–251, 358–360, and Arg-364; these read EQ and GNG. One can recognise a Fido domain in the interval 275–410; it reads ITVNDILEIH…VRPFIRFIAK (136 aa).

It belongs to the fic family.

The protein localises to the membrane. The catalysed reaction is L-tyrosyl-[protein] + ATP = O-(5'-adenylyl)-L-tyrosyl-[protein] + diphosphate. It catalyses the reaction L-threonyl-[protein] + ATP = 3-O-(5'-adenylyl)-L-threonyl-[protein] + diphosphate. Its activity is regulated as follows. Adenylyltransferase activity is inhibited by the inhibitory helix present at the N-terminus: Glu-224 binds ATP and competes with ATP-binding at Arg-364, thereby preventing adenylyltransferase activity. Activation dissociates ATP-binding from Glu-224, allowing ordered binding of the entire ATP moiety with the alpha-phosphate in an orientation that is productive for accepting an incoming target hydroxyl side chain. Adenylyltransferase that mediates the addition of adenosine 5'-monophosphate (AMP) to specific residues of target proteins. This chain is Protein adenylyltransferase FICD (ficd), found in Danio rerio (Zebrafish).